The primary structure comprises 510 residues: Alpha-L-arabinofuranosidase B (510 aa).

The N-terminal stretch at 1–24 (MTMSRSSRSSVLALALATGSLVAA) is a signal peptide. The catalytic stretch occupies residues 25-342 (GPCDIYSSGG…ADIVAAKYAT (318 aa)). Disulfide bonds link cysteine 27-cysteine 37, cysteine 87-cysteine 92, and cysteine 182-cysteine 183. Asparagine 89 is a glycosylation site (N-linked (GlcNAc...) asparagine). Substrate is bound at residue aspartate 225. The active-site Nucleophile is glutamate 227. Substrate contacts are provided by asparagine 228 and glycine 303. The active-site Proton donor is the aspartate 304. The ABD stretch occupies residues 343-510 (TSLISGPALT…VSWVVADGFA (168 aa)). An intrachain disulfide couples cysteine 412 to cysteine 450. Substrate-binding residues include histidine 427, asparagine 429, phenylalanine 430, aspartate 446, histidine 475, glutamate 477, leucine 480, and aspartate 500.

The protein belongs to the glycosyl hydrolase 54 family.

The protein resides in the secreted. It carries out the reaction Hydrolysis of terminal non-reducing alpha-L-arabinofuranoside residues in alpha-L-arabinosides.. The protein operates within glycan metabolism; L-arabinan degradation. Alpha-L-arabinofuranosidase involved in the degradation of arabinoxylan, a major component of plant hemicellulose. Able to hydrolyze 1,5-, 1,3- and 1,2-alpha-linkages not only in L-arabinofuranosyl oligosaccharides, but also in polysaccharides containing terminal non-reducing L-arabinofuranoses in side chains, like L-arabinan, arabinogalactan and arabinoxylan. This Emericella nidulans (strain FGSC A4 / ATCC 38163 / CBS 112.46 / NRRL 194 / M139) (Aspergillus nidulans) protein is Alpha-L-arabinofuranosidase B (abfB).